We begin with the raw amino-acid sequence, 408 residues long: Guanine nucleotide-binding protein alpha-14 subunit (408 aa).

Residues 39–46 (HSEELEAK), 79–86 (GGPLSGKS), 201–205 (TRIAD), 216–222 (VHSRKAT), 241–245 (DVGGQ), 285–288 (FPKF), 325–328 (NKVD), and alanine 380 each bind GTP. The region spanning 71 to 408 (SHIKILILGG…KANAKATGLS (338 aa)) is the G-alpha domain. Residues 74–87 (KILILGGPLSGKST) form a G1 motif region. Mg(2+) is bound at residue serine 86. Residues 214–222 (DIVHSRKAT) are G2 motif. Threonine 222 contacts Mg(2+). The segment at 237–246 (LLMIDVGGQR) is G3 motif. A G4 motif region spans residues 321-328 (LLFFNKVD). The tract at residues 378 to 383 (TTATNT) is G5 motif.

The protein belongs to the G-alpha family. In terms of assembly, g proteins are composed of 3 units; alpha, beta and gamma. The alpha chain contains the guanine nucleotide binding site. Interacts with the dopamine receptor dop-2 (via C-terminus); the interaction is direct.

Functionally, guanine nucleotide-binding proteins (G proteins) are involved as modulators or transducers in various transmembrane signaling systems. In association with the G-protein coupled dopamine receptor dop-2, modulates two types of learning: touch habituation and chemosensory associative conditioning. The polypeptide is Guanine nucleotide-binding protein alpha-14 subunit (Caenorhabditis elegans).